The primary structure comprises 376 residues: Succinyl-diaminopimelate desuccinylase (376 aa).

A Zn(2+)-binding site is contributed by His67. Asp69 is a catalytic residue. Residue Asp100 coordinates Zn(2+). Catalysis depends on Glu134, which acts as the Proton acceptor. Residues Glu135, Glu163, and His349 each contribute to the Zn(2+) site.

This sequence belongs to the peptidase M20A family. DapE subfamily. Homodimer. It depends on Zn(2+) as a cofactor. The cofactor is Co(2+).

The catalysed reaction is N-succinyl-(2S,6S)-2,6-diaminopimelate + H2O = (2S,6S)-2,6-diaminopimelate + succinate. It participates in amino-acid biosynthesis; L-lysine biosynthesis via DAP pathway; LL-2,6-diaminopimelate from (S)-tetrahydrodipicolinate (succinylase route): step 3/3. Catalyzes the hydrolysis of N-succinyl-L,L-diaminopimelic acid (SDAP), forming succinate and LL-2,6-diaminopimelate (DAP), an intermediate involved in the bacterial biosynthesis of lysine and meso-diaminopimelic acid, an essential component of bacterial cell walls. The protein is Succinyl-diaminopimelate desuccinylase of Shewanella sediminis (strain HAW-EB3).